The sequence spans 226 residues: Ribose-5-phosphate isomerase A (226 aa).

Residues 32-35 (TGST), 85-88 (DGAD), and 98-101 (KGGG) each bind substrate. E107 functions as the Proton acceptor in the catalytic mechanism. K125 is a binding site for substrate.

Belongs to the ribose 5-phosphate isomerase family. As to quaternary structure, homodimer.

It catalyses the reaction aldehydo-D-ribose 5-phosphate = D-ribulose 5-phosphate. It participates in carbohydrate degradation; pentose phosphate pathway; D-ribose 5-phosphate from D-ribulose 5-phosphate (non-oxidative stage): step 1/1. Functionally, catalyzes the reversible conversion of ribose-5-phosphate to ribulose 5-phosphate. The polypeptide is Ribose-5-phosphate isomerase A (Saccharophagus degradans (strain 2-40 / ATCC 43961 / DSM 17024)).